Consider the following 191-residue polypeptide: UPF0312 protein PSPA7_0523 (191 aa).

Positions 1–23 are cleaved as a signal peptide; that stretch reads MLKKTLAALALGSALFTAGQAMA.

Belongs to the UPF0312 family. Type 1 subfamily.

The protein resides in the periplasm. The sequence is that of UPF0312 protein PSPA7_0523 from Pseudomonas paraeruginosa (strain DSM 24068 / PA7) (Pseudomonas aeruginosa (strain PA7)).